The primary structure comprises 83 residues: Exodeoxyribonuclease 7 small subunit (83 aa).

It belongs to the XseB family. Heterooligomer composed of large and small subunits.

The protein resides in the cytoplasm. It catalyses the reaction Exonucleolytic cleavage in either 5'- to 3'- or 3'- to 5'-direction to yield nucleoside 5'-phosphates.. Bidirectionally degrades single-stranded DNA into large acid-insoluble oligonucleotides, which are then degraded further into small acid-soluble oligonucleotides. In Nitrobacter hamburgensis (strain DSM 10229 / NCIMB 13809 / X14), this protein is Exodeoxyribonuclease 7 small subunit.